Here is a 760-residue protein sequence, read N- to C-terminus: H(+)/Cl(-) exchange transporter 4 (760 aa).

The Cytoplasmic segment spans residues 1-67; that stretch reads MVNAGAMSGS…WEFIKSLLDA (67 aa). A required for localization in the endoplasmic reticulum region spans residues 14-63; it reads MDFLDEPFPDVGTYEDFHTIDWLREKSRDTDRHRKITSKSKESIWEFIKS. 2 helical membrane passes run 68–105 and 151–174; these read WSGW…VCLS and LNYL…VRVF. Residues 180-184 carry the Selectivity filter part_1 motif; it reads GSGIP. Residue Ser-181 coordinates chloride. Residues 183–190 constitute an intramembrane region (helical); that stretch reads IPEIKTIL. 2 consecutive transmembrane segments (helical) span residues 200–218 and 224–243; these read GKWT…VSSG and EGPL…SLFS. The short motif at 222–226 is the Selectivity filter part_2 element; the sequence is GKEGP. 2 consecutive intramembrane regions (helical) follow at residues 255–267 and 271–279; these read VLSA…VSVA and PIGGVLFSL. The next 5 helical transmembrane spans lie at 291–309, 333–358, 365–385, 442–462, and 467–486; these read LWRS…RSIN, FPFI…AWCR, LGKY…IIAY, MWQL…TFGM, and GLFI…VGIG. The Selectivity filter part_3 signature appears at 467–471; it reads GLFIP. Phe-469 serves as a coordination point for chloride. Intramembrane regions (helical) lie at residues 514–528 and 532–543; these read GLYA…LGGV and TVSLVVIMFELT. Residues 544–547 constitute an intramembrane region (note=Loop between two helices); the sequence is GGLE. Residues 548–566 form a helical membrane-spanning segment; it reads YIVPLMAAAVTSKWVADAF. Residues 567-760 are Cytoplasmic-facing; it reads GKEGIYEAHI…NQDPESIMFN (194 aa). Chloride is bound at residue Tyr-572. The CBS 1 domain maps to 600–666; the sequence is MRPRRGEPPL…AIKNARQRQE (67 aa). Residues Ser-610 and 631–633 contribute to the ATP site; that span reads YNG. The required for localization in the endoplasmic reticulum stretch occupies residues 667–696; sequence GIVSNSIMYFTEEPPELPANSPHPLKLRRI. Residues 697–755 form the CBS 2 domain; it reads LNLSPFTVTDHTPMETVVDIFRKLGLRQCLVTRSGRLLGIITKKDVLRHMAQMANQDPE. 738–741 lines the ATP pocket; sequence TKKD.

This sequence belongs to the chloride channel (TC 2.A.49) family. ClC-4/CLCN4 subfamily. Monomer. Forms heterodimers with CLCN3. In terms of tissue distribution, abundant in skeletal muscle and also detectable in brain and heart.

The protein resides in the early endosome membrane. Its subcellular location is the late endosome membrane. It localises to the endoplasmic reticulum membrane. The protein localises to the lysosome membrane. It is found in the recycling endosome membrane. Its function is as follows. Strongly outwardly rectifying, electrogenic H(+)/Cl(-)exchanger which mediates the exchange of chloride ions against protons. The CLC channel family contains both chloride channels and proton-coupled anion transporters that exchange chloride or another anion for protons. The presence of conserved gating glutamate residues is typical for family members that function as antiporters. This chain is H(+)/Cl(-) exchange transporter 4 (CLCN4), found in Homo sapiens (Human).